The sequence spans 87 residues: Small ribosomal subunit protein bS20 (87 aa).

It belongs to the bacterial ribosomal protein bS20 family.

Binds directly to 16S ribosomal RNA. The polypeptide is Small ribosomal subunit protein bS20 (Alkaliphilus metalliredigens (strain QYMF)).